Consider the following 931-residue polypeptide: Protein translocase subunit SecA (931 aa).

Residues Q87, G105–T109, and D523 contribute to the ATP site. Residues C915, C917, C926, and H927 each contribute to the Zn(2+) site.

The protein belongs to the SecA family. As to quaternary structure, monomer and homodimer. Part of the essential Sec protein translocation apparatus which comprises SecA, SecYEG and auxiliary proteins SecDF-YajC and YidC. The cofactor is Zn(2+).

The protein resides in the cell inner membrane. The protein localises to the cytoplasm. The enzyme catalyses ATP + H2O + cellular proteinSide 1 = ADP + phosphate + cellular proteinSide 2.. Functionally, part of the Sec protein translocase complex. Interacts with the SecYEG preprotein conducting channel. Has a central role in coupling the hydrolysis of ATP to the transfer of proteins into and across the cell membrane, serving both as a receptor for the preprotein-SecB complex and as an ATP-driven molecular motor driving the stepwise translocation of polypeptide chains across the membrane. The polypeptide is Protein translocase subunit SecA (Xanthobacter autotrophicus (strain ATCC BAA-1158 / Py2)).